The following is a 511-amino-acid chain: Lysine--tRNA ligase 2 (511 aa).

Residues 1 to 11 (MTMEINNTDPS) show a composition bias toward polar residues. Positions 1-21 (MTMEINNTDPSENMPLPDDVD) are disordered. The Mg(2+) site is built by E421 and E428.

This sequence belongs to the class-II aminoacyl-tRNA synthetase family. As to quaternary structure, homodimer. Requires Mg(2+) as cofactor.

The protein localises to the cytoplasm. The enzyme catalyses tRNA(Lys) + L-lysine + ATP = L-lysyl-tRNA(Lys) + AMP + diphosphate. In Methanosarcina acetivorans (strain ATCC 35395 / DSM 2834 / JCM 12185 / C2A), this protein is Lysine--tRNA ligase 2.